Here is a 100-residue protein sequence, read N- to C-terminus: Urease subunit gamma (100 aa).

It belongs to the urease gamma subunit family. Heterotrimer of UreA (gamma), UreB (beta) and UreC (alpha) subunits. Three heterotrimers associate to form the active enzyme.

Its subcellular location is the cytoplasm. It carries out the reaction urea + 2 H2O + H(+) = hydrogencarbonate + 2 NH4(+). It participates in nitrogen metabolism; urea degradation; CO(2) and NH(3) from urea (urease route): step 1/1. The sequence is that of Urease subunit gamma from Limosilactobacillus fermentum (Lactobacillus fermentum).